Reading from the N-terminus, the 410-residue chain is Adenosine receptor A2a (410 aa).

Over 1-4 the chain is Extracellular; sequence MGSS. A helical transmembrane segment spans residues 5–29; it reads VYITVELAIAVLAILGNVLVCWAVW. Residues 30-39 lie on the Cytoplasmic side of the membrane; that stretch reads INSNLQNVTN. Residues 40-63 traverse the membrane as a helical segment; it reads FFVVSLAAADIAVGVLAIPFAITI. Residues 64–74 lie on the Extracellular side of the membrane; sequence STGFCAACHGC. 3 disulfides stabilise this stretch: C68/C154, C71/C143, and C74/C161. Residues 75 to 97 traverse the membrane as a helical segment; the sequence is LFFACFVLVLTQSSIFSLLAIAI. Over 98–117 the chain is Cytoplasmic; sequence DRYIAIRIPLRYNGLVTGVR. A helical membrane pass occupies residues 118-140; it reads AKGIIAICWVLSFAIGLTPMLGW. The Extracellular segment spans residues 141 to 168; that stretch reads NNCSQKDGNSTKTCGEGRVTCLFEDVVP. Residues N142 and N149 are each glycosylated (N-linked (GlcNAc...) asparagine). E164 contacts adenosine. The helical transmembrane segment at 169–193 threads the bilayer; that stretch reads MNYMVYYNFFAFVLLPLLLMLAIYL. Over 194 to 229 the chain is Cytoplasmic; the sequence is RIFLAARRQLKQMESQPLPGERTRSTLQKEVHAAKS. Residues 230-253 traverse the membrane as a helical segment; sequence LAIIVGLFALCWLPLHIINCFTFF. Adenosine is bound at residue N248. C254 and C257 are disulfide-bonded. The Extracellular portion of the chain corresponds to 254–261; that stretch reads CSTCRHAP. Residues 262–285 traverse the membrane as a helical segment; sequence PWLMYLAIILSHSNSVVNPFIYAY. Adenosine contacts are provided by S272 and H273. The Cytoplasmic segment spans residues 286-410; sequence RIREFRQTFR…SSWSSEFAPS (125 aa). The interval 322-410 is interaction with GAS2L2; that stretch reads HSTEGEQVSL…SSWSSEFAPS (89 aa). The tract at residues 344 to 410 is disordered; the sequence is GSATHSGRRP…SSWSSEFAPS (67 aa). Residues 371 to 388 show a composition bias toward basic and acidic residues; the sequence is RDVELPTQERQEGQEHPG. Residues 401–410 are compositionally biased toward polar residues; that stretch reads SSWSSEFAPS.

This sequence belongs to the G-protein coupled receptor 1 family. Interacts (via cytoplasmic C-terminal domain) with USP4; the interaction is direct. May interact with DRD4. Interacts with NECAB2. Interacts (via cytoplasmic C-terminal domain) with GAS2L2; interaction enhances receptor-mediated adenylyl cyclase activity. Post-translationally, ubiquitinated. Deubiquitinated by USP4; leading to stabilization and expression at the cell surface. As to expression, expressed in striatal neurons (at protein level).

The protein resides in the cell membrane. Receptor for adenosine. The activity of this receptor is mediated by G proteins which activate adenylyl cyclase. The sequence is that of Adenosine receptor A2a (Adora2a) from Rattus norvegicus (Rat).